The following is a 308-amino-acid chain: tRNA pseudouridine synthase B (308 aa).

The active-site Nucleophile is the D37.

It belongs to the pseudouridine synthase TruB family. Type 1 subfamily.

The enzyme catalyses uridine(55) in tRNA = pseudouridine(55) in tRNA. Responsible for synthesis of pseudouridine from uracil-55 in the psi GC loop of transfer RNAs. The polypeptide is tRNA pseudouridine synthase B (Deinococcus radiodurans (strain ATCC 13939 / DSM 20539 / JCM 16871 / CCUG 27074 / LMG 4051 / NBRC 15346 / NCIMB 9279 / VKM B-1422 / R1)).